A 204-amino-acid chain; its full sequence is Large ribosomal subunit protein eL15 (204 aa).

It belongs to the eukaryotic ribosomal protein eL15 family. As to quaternary structure, component of the large ribosomal subunit.

The protein localises to the cytoplasm. Its function is as follows. Component of the large ribosomal subunit. The ribosome is a large ribonucleoprotein complex responsible for the synthesis of proteins in the cell. The polypeptide is Large ribosomal subunit protein eL15 (rpl15) (Tachysurus fulvidraco (Yellow catfish)).